A 196-amino-acid polypeptide reads, in one-letter code: uncharacterized protein (196 aa).

The segment at Met-1–Glu-21 is disordered.

This is an uncharacterized protein from Mus musculus (Mouse).